The primary structure comprises 174 residues: Nucleoside-triphosphatase THEP1 (174 aa).

Residues 15-22 (GMPGVGKT) and 102-109 (LAIVDEIG) contribute to the ATP site.

The protein belongs to the THEP1 NTPase family.

The catalysed reaction is a ribonucleoside 5'-triphosphate + H2O = a ribonucleoside 5'-diphosphate + phosphate + H(+). Functionally, has nucleotide phosphatase activity towards ATP, GTP, CTP, TTP and UTP. May hydrolyze nucleoside diphosphates with lower efficiency. In Pyrobaculum islandicum (strain DSM 4184 / JCM 9189 / GEO3), this protein is Nucleoside-triphosphatase THEP1.